The sequence spans 102 residues: Small ribosomal subunit protein uS10 (102 aa).

It belongs to the universal ribosomal protein uS10 family. Part of the 30S ribosomal subunit.

Its function is as follows. Involved in the binding of tRNA to the ribosomes. This is Small ribosomal subunit protein uS10 from Geobacter metallireducens (strain ATCC 53774 / DSM 7210 / GS-15).